The chain runs to 266 residues: Glutamate racemase (266 aa).

Substrate-binding positions include D9 to S10 and Y41 to G42. C73 (proton donor/acceptor) is an active-site residue. N74–S75 serves as a coordination point for substrate. C183 serves as the catalytic Proton donor/acceptor. Substrate is bound at residue T184–H185.

This sequence belongs to the aspartate/glutamate racemases family.

The catalysed reaction is L-glutamate = D-glutamate. The protein operates within cell wall biogenesis; peptidoglycan biosynthesis. Provides the (R)-glutamate required for cell wall biosynthesis. The protein is Glutamate racemase of Shewanella loihica (strain ATCC BAA-1088 / PV-4).